A 579-amino-acid chain; its full sequence is 2-isopropylmalate synthase (579 aa).

Residues 40–314 form the Pyruvate carboxyltransferase domain; sequence PRWCAVDLRD…DPMIDFSDID (275 aa). Mg(2+)-binding residues include Asp-49, His-253, His-255, and Asn-289. The tract at residues 456–579 is regulatory domain; that stretch reads SGKADGQWGR…VNRAIRDAQS (124 aa).

The protein belongs to the alpha-IPM synthase/homocitrate synthase family. LeuA type 2 subfamily. As to quaternary structure, homodimer. It depends on Mg(2+) as a cofactor.

The protein localises to the cytoplasm. It catalyses the reaction 3-methyl-2-oxobutanoate + acetyl-CoA + H2O = (2S)-2-isopropylmalate + CoA + H(+). It participates in amino-acid biosynthesis; L-leucine biosynthesis; L-leucine from 3-methyl-2-oxobutanoate: step 1/4. Functionally, catalyzes the condensation of the acetyl group of acetyl-CoA with 3-methyl-2-oxobutanoate (2-ketoisovalerate) to form 3-carboxy-3-hydroxy-4-methylpentanoate (2-isopropylmalate). This Pseudarthrobacter chlorophenolicus (strain ATCC 700700 / DSM 12829 / CIP 107037 / JCM 12360 / KCTC 9906 / NCIMB 13794 / A6) (Arthrobacter chlorophenolicus) protein is 2-isopropylmalate synthase.